The primary structure comprises 116 residues: Large ribosomal subunit protein bL17 (116 aa).

It belongs to the bacterial ribosomal protein bL17 family. Part of the 50S ribosomal subunit. Contacts protein L32.

The polypeptide is Large ribosomal subunit protein bL17 (Prochlorococcus marinus (strain MIT 9211)).